A 275-amino-acid polypeptide reads, in one-letter code: DNA-directed RNA polymerase subunit Rpo3 (275 aa).

The protein belongs to the archaeal Rpo3/eukaryotic RPB3 RNA polymerase subunit family. Part of the RNA polymerase complex.

Its subcellular location is the cytoplasm. The enzyme catalyses RNA(n) + a ribonucleoside 5'-triphosphate = RNA(n+1) + diphosphate. Functionally, DNA-dependent RNA polymerase (RNAP) catalyzes the transcription of DNA into RNA using the four ribonucleoside triphosphates as substrates. The protein is DNA-directed RNA polymerase subunit Rpo3 of Methanopyrus kandleri (strain AV19 / DSM 6324 / JCM 9639 / NBRC 100938).